A 343-amino-acid polypeptide reads, in one-letter code: Aspartate carbamoyltransferase catalytic subunit (343 aa).

The span at 1-14 (MTTDTTGRTGNPAA) shows a compositional bias: polar residues. The tract at residues 1 to 20 (MTTDTTGRTGNPAATASPDR) is disordered. Carbamoyl phosphate contacts are provided by arginine 91 and threonine 92. Lysine 119 contacts L-aspartate. Positions 141, 171, and 174 each coordinate carbamoyl phosphate. 2 residues coordinate L-aspartate: arginine 204 and arginine 259. The carbamoyl phosphate site is built by glycine 300 and proline 301.

This sequence belongs to the aspartate/ornithine carbamoyltransferase superfamily. ATCase family. As to quaternary structure, heterododecamer (2C3:3R2) of six catalytic PyrB chains organized as two trimers (C3), and six regulatory PyrI chains organized as three dimers (R2).

It catalyses the reaction carbamoyl phosphate + L-aspartate = N-carbamoyl-L-aspartate + phosphate + H(+). The protein operates within pyrimidine metabolism; UMP biosynthesis via de novo pathway; (S)-dihydroorotate from bicarbonate: step 2/3. In terms of biological role, catalyzes the condensation of carbamoyl phosphate and aspartate to form carbamoyl aspartate and inorganic phosphate, the committed step in the de novo pyrimidine nucleotide biosynthesis pathway. This Burkholderia lata (strain ATCC 17760 / DSM 23089 / LMG 22485 / NCIMB 9086 / R18194 / 383) protein is Aspartate carbamoyltransferase catalytic subunit.